The sequence spans 101 residues: Small ribosomal subunit protein uS14A (101 aa).

This sequence belongs to the universal ribosomal protein uS14 family. In terms of assembly, part of the 30S ribosomal subunit. Contacts proteins S3 and S10.

Binds 16S rRNA, required for the assembly of 30S particles and may also be responsible for determining the conformation of the 16S rRNA at the A site. In Salinispora tropica (strain ATCC BAA-916 / DSM 44818 / JCM 13857 / NBRC 105044 / CNB-440), this protein is Small ribosomal subunit protein uS14A.